Consider the following 490-residue polypeptide: Costunolide synthase (490 aa).

A helical; Signal-anchor for type II membrane protein transmembrane segment spans residues 3–23 (PLTIVSLAVASFLLFAFWALS). 2 N-linked (GlcNAc...) asparagine glycosylation sites follow: Asn-167 and Asn-255. Heme is bound at residue Cys-432.

Belongs to the cytochrome P450 family. Requires heme as cofactor.

It is found in the membrane. The catalysed reaction is germacra-1(10),4,11(13)-trien-12-oate + reduced [NADPH--hemoprotein reductase] + O2 = (+)-costunolide + oxidized [NADPH--hemoprotein reductase] + 2 H2O. The protein operates within secondary metabolite biosynthesis; terpenoid biosynthesis. Functionally, involved in the biosynthesis of germacrene-derived sesquiterpene lactones. Component of the parthenolide biosynthetic pathway; parthenolide and conjugates are promising anti-cancer drugs highly active against colon cancer cells. Hydroxylates germacrene A acid to 6-alpha-hydroxy-germacrne A acid, a precursor of sesquiterpene lactones that spontaneously undergoes a lactonization which yields costunolide. The polypeptide is Costunolide synthase (Lactuca sativa (Garden lettuce)).